The sequence spans 209 residues: Imidazole glycerol phosphate synthase subunit HisH (209 aa).

In terms of domain architecture, Glutamine amidotransferase type-1 spans 1–205 (MIAIIDYGMG…KGVVETWKSS (205 aa)). The active-site Nucleophile is C79. Residues H180 and E182 contribute to the active site.

As to quaternary structure, heterodimer of HisH and HisF.

It is found in the cytoplasm. It carries out the reaction 5-[(5-phospho-1-deoxy-D-ribulos-1-ylimino)methylamino]-1-(5-phospho-beta-D-ribosyl)imidazole-4-carboxamide + L-glutamine = D-erythro-1-(imidazol-4-yl)glycerol 3-phosphate + 5-amino-1-(5-phospho-beta-D-ribosyl)imidazole-4-carboxamide + L-glutamate + H(+). The catalysed reaction is L-glutamine + H2O = L-glutamate + NH4(+). It functions in the pathway amino-acid biosynthesis; L-histidine biosynthesis; L-histidine from 5-phospho-alpha-D-ribose 1-diphosphate: step 5/9. IGPS catalyzes the conversion of PRFAR and glutamine to IGP, AICAR and glutamate. The HisH subunit catalyzes the hydrolysis of glutamine to glutamate and ammonia as part of the synthesis of IGP and AICAR. The resulting ammonia molecule is channeled to the active site of HisF. In Bacillus anthracis (strain CDC 684 / NRRL 3495), this protein is Imidazole glycerol phosphate synthase subunit HisH.